Consider the following 317-residue polypeptide: Putative pyridoxal kinase BUD17 (317 aa).

Substrate contacts are provided by serine 16 and tyrosine 128. Residues 190–191 (TS) and 220–232 (EIPK…SGSG) contribute to the ATP site. Aspartate 233 contacts substrate.

Belongs to the pyridoxine kinase family. A divalent metal cation is required as a cofactor.

It localises to the cytoplasm. It is found in the nucleus. It carries out the reaction pyridoxal + ATP = pyridoxal 5'-phosphate + ADP + H(+). Its function is as follows. Required for synthesis of pyridoxal-5-phosphate from vitamin B6. Important for bud site selection. This is Putative pyridoxal kinase BUD17 (BUD17) from Saccharomyces cerevisiae (strain ATCC 204508 / S288c) (Baker's yeast).